The sequence spans 200 residues: Recombination protein RecR (200 aa).

A C4-type zinc finger spans residues 57-72; that stretch reads CRQCRTLTEDELCPQC. The region spanning 80–175 is the Toprim domain; that stretch reads TLLCVVEGPM…ITSRIAHGVP (96 aa).

It belongs to the RecR family.

May play a role in DNA repair. It seems to be involved in an RecBC-independent recombinational process of DNA repair. It may act with RecF and RecO. This is Recombination protein RecR from Pseudomonas fluorescens (strain ATCC BAA-477 / NRRL B-23932 / Pf-5).